The chain runs to 373 residues: Capsular polysaccharide phosphotransferase (373 aa).

It belongs to the stealth family.

In terms of biological role, part of a capsule gene locus. Expression was not detected under standard growth conditions. This chain is Capsular polysaccharide phosphotransferase, found in Neisseria meningitidis serogroup B.